Consider the following 1300-residue polypeptide: Phospholipid-transporting ATPase IK (1300 aa).

Residues 1–11 (MGTGPAQTPRS) show a composition bias toward polar residues. Residues 1–98 (MGTGPAQTPR…SLGQREDLQD (98 aa)) are disordered. Residues 1-149 (MGTGPAQTPR…TAKYNFYSFL (149 aa)) lie on the Cytoplasmic side of the membrane. A compositionally biased stretch (basic residues) spans 65 to 74 (RRHKAQPGRA). A helical transmembrane segment spans residues 150 to 171 (PLNLYEQFHRVSNLFFLIIIIL). At 172–177 (QSIPDI) the chain is on the exoplasmic loop side. The chain crosses the membrane as a helical span at residues 178–197 (STLPWFSLSTPMVCLLFIRA). Topologically, residues 198–381 (TRDLVDDMGR…TKLDLLMNKL (184 aa)) are cytoplasmic. A helical transmembrane segment spans residues 382–403 (VVVIFISVVLVCLVLAFGFGFS). Residues 404 to 430 (VKEFKDHHYYLSGVHGSSVAAESFFVF) lie on the Exoplasmic loop side of the membrane. The chain crosses the membrane as a helical span at residues 431–452 (WSFLILLSVTIPMSMFILSEFI). Residues 453-995 (YLGNSVFIDW…GRWSYVRICK (543 aa)) are Cytoplasmic-facing. The active-site 4-aspartylphosphate intermediate is the D495. ATP contacts are provided by D495, K496, T497, E596, F637, K660, R693, T763, G764, D765, R913, and K919. D495 is a Mg(2+) binding site. T497 is a binding site for Mg(2+). Residue D939 participates in Mg(2+) binding. 2 residues coordinate ATP: N942 and D943. Residue D943 participates in Mg(2+) binding. Residues 996-1016 (FLRYFFYKSMASMMVQVWFAC) form a helical membrane-spanning segment. At 1017-1028 (YNGFTGQPLYEG) the chain is on the exoplasmic loop side. A helical transmembrane segment spans residues 1029–1048 (WFLALFNLLYSTLPVLYIGL). At 1049 to 1078 (FEQDVSAEQSLEKPELYVVGQKDELFNYWV) the chain is on the cytoplasmic side. A helical membrane pass occupies residues 1079–1100 (FVQAIAHGVTTSLVNFFMTLWI). The Exoplasmic loop portion of the chain corresponds to 1101–1112 (SRDTAGPASFSD). Residues 1113–1135 (HQSFAVVVALSCLLSITMEVILI) traverse the membrane as a helical segment. Residues 1136–1141 (IKYWTA) are Cytoplasmic-facing. A helical membrane pass occupies residues 1142–1162 (LCVATILLSLGFYAIMTTTTQ). Topologically, residues 1163–1182 (SFWLFRVSPTTFPFLYADLS) are exoplasmic loop. A helical membrane pass occupies residues 1183-1207 (VMSSPSILLVVLLSVSINTFPVLAL). Residues 1208–1300 (RVIFPALKEL…EAASSPKESQ (93 aa)) are Cytoplasmic-facing. Residues 1272–1300 (RGPGVSSDIASESLDPSDEEAASSPKESQ) are disordered.

This sequence belongs to the cation transport ATPase (P-type) (TC 3.A.3) family. Type IV subfamily. Mg(2+) is required as a cofactor. Isoform 3 was only detected in testis.

Its subcellular location is the cytoplasmic vesicle. It localises to the secretory vesicle. It is found in the acrosome membrane. The protein resides in the endoplasmic reticulum membrane. The catalysed reaction is ATP + H2O + phospholipidSide 1 = ADP + phosphate + phospholipidSide 2.. It catalyses the reaction a 1,2-diacyl-sn-glycero-3-phospho-L-serine(out) + ATP + H2O = a 1,2-diacyl-sn-glycero-3-phospho-L-serine(in) + ADP + phosphate + H(+). Its function is as follows. P4-ATPase flippase which catalyzes the hydrolysis of ATP coupled to the transport of aminophospholipids from the outer to the inner leaflet of various membranes and ensures the maintenance of asymmetric distribution of phospholipids. Phospholipid translocation also seems to be implicated in vesicle formation and in uptake of lipid signaling molecules. May be responsible for the maintenance of asymmetric distribution of phosphatidylserine (PS) in spermatozoa membranes. Involved in acrosome reactions and binding of spermatozoa to zona pellucida. In Homo sapiens (Human), this protein is Phospholipid-transporting ATPase IK.